Consider the following 425-residue polypeptide: Aromatic prenyl transferase PC-22 (425 aa).

L-tryptophan-binding positions include 83–84 (GI) and E92. Residues R107, K198, Y200, R265, K267, Y269, Y345, Y410, and Y414 each contribute to the substrate site.

This sequence belongs to the tryptophan dimethylallyltransferase family. In terms of assembly, homodimer.

Its pathway is secondary metabolite biosynthesis. In terms of biological role, aromatic prenyl transferase; part of the gene cluster that mediates the biosynthesis of the indole diterpenes penitrems. The geranylgeranyl diphosphate (GGPP) synthase penG catalyzes the first step in penitrem biosynthesis via conversion of farnesyl pyrophosphate and isopentyl pyrophosphate into geranylgeranyl pyrophosphate (GGPP). Condensation of indole-3-glycerol phosphate with GGPP by the prenyl transferase penC then forms 3-geranylgeranylindole (3-GGI). Epoxidation by the FAD-dependent monooxygenase penM leads to a epoxidized-GGI that is substrate of the terpene cyclase penB for cyclization to yield paspaline. Paspaline is subsequently converted to 13-desoxypaxilline by the cytochrome P450 monooxygenase penP, the latter being then converted to paxilline by the cytochrome P450 monooxygenase penQ. Paxilline is converted to beta-paxitriol via C-10 ketoreduction by the short-chain dehydrogenase PC-15 which can be monoprenylated at the C-20 by the indole diterpene prenyltransferase penD. A two-step elimination (acetylation and elimination) process performed by the O-acetyltransferase PC-16 and the P.simplicissimum ptmI-ortholog not yet identified in P.crustosum, leads to the production of the prenylated form of penijanthine. The FAD-linked oxidoreductase ptmO then converts the prenylated form of penijanthine into PC-M5 which is in turn transformed into PC-M4 by the aromatic dimethylallyltransferase PC-22. A series of oxidation steps involving 4 cytochrome P450 monooxygenases (PC-21, PC-05, PC-23, PC-20) and a FAD-dependent monooxygenase (PC-14) are required for the transformation of PC-M4 to penitrems A and E. Synthesis of these final products is proposed to proceed via penitrems D and C (PC-21, PC-05, PC-14) and penitrems B and F (PC-21, PC-05, PC-14, PC-23). The protein is Aromatic prenyl transferase PC-22 of Penicillium crustosum (Blue mold fungus).